Here is a 395-residue protein sequence, read N- to C-terminus: Non-homologous end joining protein Ku (395 aa).

One can recognise a Ku domain in the interval 9-181 (ISFGLVSIPI…PPEDAAPDGD (173 aa)). Positions 252–395 (RAARTSRDDE…SASSRKRTSA (144 aa)) are disordered. 2 stretches are compositionally biased toward polar residues: residues 283-292 (SSKTSGQSSG) and 311-320 (GKTVTRSGDS). Basic residues predominate over residues 351-361 (TARKTTAKKTT). Residues 362 to 371 (AKGTTGTTAA) show a composition bias toward low complexity.

It belongs to the prokaryotic Ku family. As to quaternary structure, homodimer. Interacts with LigD.

In terms of biological role, with LigD forms a non-homologous end joining (NHEJ) DNA repair enzyme, which repairs dsDNA breaks with reduced fidelity. Binds linear dsDNA with 5'- and 3'- overhangs but not closed circular dsDNA nor ssDNA. Recruits and stimulates the ligase activity of LigD. In Streptomyces griseus subsp. griseus (strain JCM 4626 / CBS 651.72 / NBRC 13350 / KCC S-0626 / ISP 5235), this protein is Non-homologous end joining protein Ku.